Reading from the N-terminus, the 139-residue chain is ATP synthase epsilon chain 2 (139 aa).

It belongs to the ATPase epsilon chain family. F-type ATPases have 2 components, CF(1) - the catalytic core - and CF(0) - the membrane proton channel. CF(1) has five subunits: alpha(3), beta(3), gamma(1), delta(1), epsilon(1). CF(0) has three main subunits: a, b and c.

Its subcellular location is the cell inner membrane. Functionally, produces ATP from ADP in the presence of a proton gradient across the membrane. This chain is ATP synthase epsilon chain 2, found in Paraburkholderia xenovorans (strain LB400).